The chain runs to 76 residues: Histone H2A (76 aa).

The tract at residues 1–23 (MSGRGKTGGKARAKAKTRSSRAG) is disordered. S2 carries the N-acetylserine; in acipensins modification. Position 2 is an N-acetylserine; in histone H2A (S2). At S2 the chain carries Phosphoserine; in histone H2A. K6 is modified (N6-(2-hydroxyisobutyryl)lysine). The residue at position 6 (K6) is an N6-acetyllysine; in histone H2A. Basic residues predominate over residues 7 to 19 (TGGKARAKAKTRS). An N6-(2-hydroxyisobutyryl)lysine; alternate modification is found at K10. K10 bears the N6-lactoyllysine; alternate mark. An N6-succinyllysine modification is found at K10. Glycyl lysine isopeptide (Lys-Gly) (interchain with G-Cter in ubiquitin); in histone H2A cross-links involve residues K14 and K16. K37 bears the N6-(2-hydroxyisobutyryl)lysine; alternate mark. N6-(2-hydroxyisobutyryl)lysine occurs at positions 65 and 66.

Belongs to the histone H2A family. The nucleosome is a histone octamer containing two molecules each of H2A, H2B, H3 and H4 assembled in one H3-H4 heterotetramer and two H2A-H2B heterodimers. The octamer wraps approximately 147 bp of DNA. Phosphorylation on Ser-2 is enhanced during mitosis. Phosphorylation on Ser-2 directly represses transcription.

Its subcellular location is the nucleus. It is found in the chromosome. Its function is as follows. Core component of nucleosome. Nucleosomes wrap and compact DNA into chromatin, limiting DNA accessibility to the cellular machineries which require DNA as a template. Histones thereby play a central role in transcription regulation, DNA repair, DNA replication and chromosomal stability. DNA accessibility is regulated via a complex set of post-translational modifications of histones, also called histone code, and nucleosome remodeling. Functionally, acipensins are antimicrobial peptides. Acipensins 1 and 2 have antibacterial activity against Gram-positive bacteria L.monocytogenes EGD (MIC are 1.1 uM and 1.0 uM, respectively) and S.aureus ATCC 33591 (MIC are 0.9 uM and 0.6 uM, respectively), against Gram-negative bacterium E.coli ML-35p (MIC are 0.7 uM and 0.3 uM, respectively) and antifungal activity against C.albicans 820 (MIC are 1.0 uM and 0.9 uM, respectively). Acipensin 6 has antibacterial activity against Gram-negative bacterium E.coli ML-35p (MIC=2.5 uM). Antimicrobial activity is reduced by high ionic strength. Acipensins 1, 2 and 6 have no hemolytic (up to 40 uM) or cytotoxic (up to 20 uM) effects on human cells in vitro. The protein is Histone H2A of Acipenser gueldenstaedtii (Russian sturgeon).